We begin with the raw amino-acid sequence, 284 residues long: Avenin-like b10 (284 aa).

A signal peptide spans 1-18 (MKVFILALLALAATTAIA).

This sequence belongs to the prolamin family. Contains disulfide bonds.

Functionally, seed storage protein. Might be integrated via inter-chain disulfide bonds within the glutenin polymer. The sequence is that of Avenin-like b10 from Triticum aestivum (Wheat).